A 294-amino-acid chain; its full sequence is MEIRRRSPSPKIRVSYLEYGVPHDDEKPRNILEKIVWEKDREVDLARQKVPLDQLKKKISLLPPTKDFVAALKRAQIKPAVIAEVKKASPSKGVIRDDFDPVAIAKAYAAGGASCLSVLTDKQFFQGGFDVLVQVRETVDLPLLCKEFVLSPYQLFQARAAGADAVLLIAAILTDQDLRYLNKVAQSLGLDVLVEVHDAKELERVLAIGGFSLIGINNRDLATFETDLATTEVLVNQFRDRLHLDTTVLVSESGLFARSDLDRVQAAGAEAVLVGEALMRQEDVESALHALVGA.

Belongs to the TrpC family.

It carries out the reaction 1-(2-carboxyphenylamino)-1-deoxy-D-ribulose 5-phosphate + H(+) = (1S,2R)-1-C-(indol-3-yl)glycerol 3-phosphate + CO2 + H2O. It functions in the pathway amino-acid biosynthesis; L-tryptophan biosynthesis; L-tryptophan from chorismate: step 4/5. The sequence is that of Indole-3-glycerol phosphate synthase from Synechococcus sp. (strain CC9902).